The primary structure comprises 479 residues: Calcium uniporter protein, mitochondrial (479 aa).

Residues 1–54 (MNHALRRATLGLSPGLRASRLQQSFAKHQIPAVYRCEAASTPLQRAFTTSRCFR) constitute a mitochondrion transit peptide. The Mitochondrial matrix segment spans residues 55–323 (QETAAESEKD…DTLAHQGAHR (269 aa)). 2 disordered regions span residues 56-125 (ETAA…KGRL) and 206-238 (EADQ…HEGP). Positions 59 to 79 (AESEKDDAARREEQSERARKR) form a coiled coil. The segment covering 60–75 (ESEKDDAARREEQSER) has biased composition (basic and acidic residues). Residues 83–93 (NVTSGSSAQTL) are compositionally biased toward polar residues. 2 stretches are compositionally biased toward basic and acidic residues: residues 94-122 (ENDR…DMKK) and 206-224 (EADQ…KKDN). Residues 324 to 344 (LAQGGFAALAGWWGVVYYVTF) form a helical membrane-spanning segment. Residues 345 to 354 (HTQAGWDLVE) are Mitochondrial intermembrane-facing. The Selectivity filter motif lies at 350–358 (WDLVEPVTY). Glu-354 serves as a coordination point for Ca(2+). Residues 355-375 (PVTYLAGLTTVMGAYLWFLYI) traverse the membrane as a helical segment. At 376–479 (SRDLSYKAAM…GSSDKIKKKQ (104 aa)) the chain is on the mitochondrial matrix side. Residues 445–462 (KVLEEEKQGRDGTKVTEG) show a composition bias toward basic and acidic residues. The interval 445 to 479 (KVLEEEKQGRDGTKVTEGKDEDDGPGSSDKIKKKQ) is disordered.

Belongs to the MCU (TC 1.A.77) family. Homotetramer, assembles in a dimer or dimers configuration with two interfaces.

The protein resides in the mitochondrion inner membrane. It catalyses the reaction Ca(2+)(in) = Ca(2+)(out). In terms of biological role, highly selective calcium channel localized to the inner mitochondrial membrane, which mediates calcium uptake into the mitochondrial matrix. Mitochondrial calcium homeostasis plays key roles in cellular physiology and regulates ATP production, cytoplasmic calcium signals and activation of cell death pathways. Sufficient to operate as a pore-forming channel without the need of calcium-sensor or auxiliary subunit. The protein is Calcium uniporter protein, mitochondrial of Gibberella zeae (strain ATCC MYA-4620 / CBS 123657 / FGSC 9075 / NRRL 31084 / PH-1) (Wheat head blight fungus).